We begin with the raw amino-acid sequence, 504 residues long: ATP synthase subunit alpha (504 aa).

ATP is bound at residue 169 to 176 (GDRKTGKT).

The protein belongs to the ATPase alpha/beta chains family. F-type ATPases have 2 components, CF(1) - the catalytic core - and CF(0) - the membrane proton channel. CF(1) has five subunits: alpha(3), beta(3), gamma(1), delta(1), epsilon(1). CF(0) has three main subunits: a(1), b(2) and c(9-12). The alpha and beta chains form an alternating ring which encloses part of the gamma chain. CF(1) is attached to CF(0) by a central stalk formed by the gamma and epsilon chains, while a peripheral stalk is formed by the delta and b chains.

The protein localises to the cell membrane. It carries out the reaction ATP + H2O + 4 H(+)(in) = ADP + phosphate + 5 H(+)(out). Its function is as follows. Produces ATP from ADP in the presence of a proton gradient across the membrane. The alpha chain is a regulatory subunit. In Lactiplantibacillus plantarum (strain ATCC BAA-793 / NCIMB 8826 / WCFS1) (Lactobacillus plantarum), this protein is ATP synthase subunit alpha.